The primary structure comprises 537 residues: CTP synthase (537 aa).

The interval 1 to 265 (MVHFIFVTGG…DNKVLKFFNI (265 aa)) is amidoligase domain. CTP is bound at residue Ser-13. Residue Ser-13 coordinates UTP. ATP-binding positions include 14-19 (SLGKGL) and Asp-71. The Mg(2+) site is built by Asp-71 and Glu-139. CTP is bound by residues 146-148 (DIE) and Lys-222. Lys-222 is a UTP binding site. The 247-residue stretch at 290 to 536 (RIAIIAKYHK…IKAAIEYNKC (247 aa)) folds into the Glutamine amidotransferase type-1 domain. An L-glutamine-binding site is contributed by Gly-352. Residue Cys-379 is the Nucleophile; for glutamine hydrolysis of the active site. L-glutamine is bound by residues 380–383 (FGMQ), Glu-403, and Arg-464. Active-site residues include His-509 and Glu-511.

The protein belongs to the CTP synthase family. In terms of assembly, homotetramer.

It carries out the reaction UTP + L-glutamine + ATP + H2O = CTP + L-glutamate + ADP + phosphate + 2 H(+). It catalyses the reaction L-glutamine + H2O = L-glutamate + NH4(+). The catalysed reaction is UTP + NH4(+) + ATP = CTP + ADP + phosphate + 2 H(+). Its pathway is pyrimidine metabolism; CTP biosynthesis via de novo pathway; CTP from UDP: step 2/2. Allosterically activated by GTP, when glutamine is the substrate; GTP has no effect on the reaction when ammonia is the substrate. The allosteric effector GTP functions by stabilizing the protein conformation that binds the tetrahedral intermediate(s) formed during glutamine hydrolysis. Inhibited by the product CTP, via allosteric rather than competitive inhibition. Its function is as follows. Catalyzes the ATP-dependent amination of UTP to CTP with either L-glutamine or ammonia as the source of nitrogen. Regulates intracellular CTP levels through interactions with the four ribonucleotide triphosphates. This Rickettsia conorii (strain ATCC VR-613 / Malish 7) protein is CTP synthase.